A 400-amino-acid polypeptide reads, in one-letter code: Inosine-5'-monophosphate dehydrogenase (400 aa).

Residues 96–116 show a composition bias toward basic and acidic residues; that stretch reads KNESTPDQNLDKESTDGKDTK. The segment at 96 to 125 is disordered; it reads KNESTPDQNLDKESTDGKDTKSNNNIDAYS. NAD(+) is bound by residues aspartate 163 and 212-214; that span reads GIG. Residues glycine 214 and glycine 216 each coordinate K(+). Serine 217 lines the IMP pocket. Position 219 (cysteine 219) interacts with K(+). Cysteine 219 (thioimidate intermediate) is an active-site residue. Residues 252 to 254, 275 to 276, and 299 to 303 contribute to the IMP site; these read DGG, GS, and YRGMG. Arginine 315 serves as the catalytic Proton acceptor. Glutamate 329 is an IMP binding site. K(+)-binding residues include glutamate 383, serine 384, and histidine 385.

This sequence belongs to the IMPDH/GMPR family. As to quaternary structure, homotetramer. Requires K(+) as cofactor.

The protein localises to the cytoplasm. The enzyme catalyses IMP + NAD(+) + H2O = XMP + NADH + H(+). The protein operates within purine metabolism; XMP biosynthesis via de novo pathway; XMP from IMP: step 1/1. With respect to regulation, mycophenolic acid (MPA) is a non-competitive inhibitor that prevents formation of the closed enzyme conformation by binding to the same site as the amobile flap. In contrast, mizoribine monophosphate (MZP) is a competitive inhibitor that induces the closed conformation. MPA is a potent inhibitor of mammalian IMPDHs but a poor inhibitor of the bacterial enzymes. MZP is a more potent inhibitor of bacterial IMPDH. Resistant to mycophenolic acid (MPA) inhibition. Catalyzes the conversion of inosine 5'-phosphate (IMP) to xanthosine 5'-phosphate (XMP), the first committed and rate-limiting step in the de novo synthesis of guanine nucleotides, and therefore plays an important role in the regulation of cell growth. This Cryptosporidium parvum protein is Inosine-5'-monophosphate dehydrogenase.